The primary structure comprises 926 residues: MMNSNEIRQSFLDFFKERGHTILPSASLVPESPNLLFTNAGMNPFVPFFLGKQKCPYVPPRIADSQKCLRAGGKHNDLEEVGYDTYHHTFFEMLGNWSFNDYFKEEAIHWAWELLTQKWGFPKERIYATVYKPAPDEPGEFDEEAFRIWFKLFQKAKLNPLLHIHFGTKKDNFWMMGETGPCGPCSEIHIDLTPDGQSEGKLINKNSPLCIEIWNLVFIQLNANEDGSFSLLPSRHVDTGMGLERVCAIIQGTSSFRQFNRTISDYDTDLFIPLIEKLQDISKVSYTGSIPPTPDFALDPQLKKDIAFRVIVDHVRALAFAIADGILPSNLGRGHVLRRLLRRAIRFGQILGVNPPFLFEMVDPLVKIMGSHYPELIDKQGHIEEVISSEEELFARTLSHGLALFEEIKQKMIAEKRKEISGKEAFVLYDTYGFPLDLTQLLAKEQGFSVDTQGFERLMAEQRRRSLLSHEEDIVSLTKTSQFVGYEELEAEAEVVVLLSANRAIFDRTPFYAEMGGQVGDKGYVVFDQKKIEVLDTMKSASGAHVHRLAFTDDLKPGSRVYLQVDEKRRRCIAAHHTATHLLHWALRKVLGPETLQRGSYVGPDRLRFDFSHTGPLSAEELAEIERLVNEKIELNDPVTAEEESYEKVKNNPDILQLFGEKYGQRVRIVSVGRYSKELCGGTHVRSTGEIGYFKILGEYGVSAGIRRIEAACGKALEQFLHAQAAEQDKKWQILHSKDPSLPRLSKWVDTLDLDSLIEIFQRRNEELSSFEKEIKEREKLRAKKQEENFRREASQQAMAAIAQVEKIGAIPVLFLDCDAKPQSYLPLLWNEISKRIDSVAILASRSEGKINLFIGVGPSLTTKIEARNLLSQLVASFEGKGGGSKTIAQGGLKDSIEISSLFEKGRGILEQYGGQKGQTEPKATG.

Zn(2+) is bound by residues H577, H581, C680, and H684.

It belongs to the class-II aminoacyl-tRNA synthetase family. Zn(2+) is required as a cofactor.

The protein localises to the cytoplasm. It catalyses the reaction tRNA(Ala) + L-alanine + ATP = L-alanyl-tRNA(Ala) + AMP + diphosphate. Functionally, catalyzes the attachment of alanine to tRNA(Ala) in a two-step reaction: alanine is first activated by ATP to form Ala-AMP and then transferred to the acceptor end of tRNA(Ala). Also edits incorrectly charged Ser-tRNA(Ala) and Gly-tRNA(Ala) via its editing domain. The sequence is that of Alanine--tRNA ligase from Methylacidiphilum infernorum (isolate V4) (Methylokorus infernorum (strain V4)).